A 247-amino-acid chain; its full sequence is ATP synthase subunit a, chloroplastic (247 aa).

5 helical membrane-spanning segments follow: residues 38-58, 95-115, 134-154, 199-219, and 220-240; these read QVLI…TLAV, VPFI…GALL, INTT…AGIS, LVVV…VMFL, and GLFT…AYIG.

The protein belongs to the ATPase A chain family. In terms of assembly, F-type ATPases have 2 components, CF(1) - the catalytic core - and CF(0) - the membrane proton channel. CF(1) has five subunits: alpha(3), beta(3), gamma(1), delta(1), epsilon(1). CF(0) has four main subunits: a, b, b' and c.

The protein resides in the plastid. It is found in the chloroplast thylakoid membrane. Functionally, key component of the proton channel; it plays a direct role in the translocation of protons across the membrane. This is ATP synthase subunit a, chloroplastic from Daucus carota (Wild carrot).